The primary structure comprises 541 residues: Zinc finger protein 513 (541 aa).

Residues 1-118 are disordered; the sequence is MPRRKQSHPQ…GEARGERPGP (118 aa). Residues 44 to 55 are compositionally biased toward acidic residues; it reads LEFEEEEEEDEG. Phosphoserine occurs at positions 85 and 96. Basic and acidic residues predominate over residues 103–115; the sequence is EPARGPGEARGER. 8 C2H2-type zinc fingers span residues 150 to 172, 178 to 200, 206 to 228, 360 to 382, 388 to 410, 416 to 438, 444 to 466, and 472 to 494; these read YSCR…MQTH, FRCG…TRTH, YRCP…QRTH, FACS…MKTH, FRCA…QRVH, YKCP…GRIH, FRCS…MLRH, and FRCA…QKVH. The interval 492–541 is disordered; the sequence is KVHGHGGAGGPGLSAPEGWAPPHSPPSVLSTRGPAALGATGSRALHSDSP.

This sequence belongs to the krueppel C2H2-type zinc-finger protein family. Binds DNA. Can associate with the proximal promoter regions of PAX6 and SP4, and their known targets including ARR3, RHO, OPN1MW2 and OPN1SW. As to expression, widely expressed. In the eye, expression is greatest in the retina and least in the lens and cornea.

It is found in the nucleus. Transcriptional regulator that plays a role in retinal development and maintenance. The chain is Zinc finger protein 513 (Znf513) from Mus musculus (Mouse).